The chain runs to 388 residues: Phosphopentomutase (388 aa).

Residues D10, D282, H287, D323, H324, and H335 each contribute to the Mn(2+) site.

It belongs to the phosphopentomutase family. Mn(2+) is required as a cofactor.

The protein localises to the cytoplasm. It carries out the reaction 2-deoxy-alpha-D-ribose 1-phosphate = 2-deoxy-D-ribose 5-phosphate. The catalysed reaction is alpha-D-ribose 1-phosphate = D-ribose 5-phosphate. The protein operates within carbohydrate degradation; 2-deoxy-D-ribose 1-phosphate degradation; D-glyceraldehyde 3-phosphate and acetaldehyde from 2-deoxy-alpha-D-ribose 1-phosphate: step 1/2. Isomerase that catalyzes the conversion of deoxy-ribose 1-phosphate (dRib-1-P) and ribose 1-phosphate (Rib-1-P) to deoxy-ribose 5-phosphate (dRib-5-P) and ribose 5-phosphate (Rib-5-P), respectively. The chain is Phosphopentomutase from Desulfitobacterium hafniense (strain DSM 10664 / DCB-2).